The primary structure comprises 873 residues: Probable beta-glucosidase A (873 aa).

An N-terminal signal peptide occupies residues 1–19 (MRFGWLEVAALTAASVANA). N-linked (GlcNAc...) asparagine glycosylation is found at N71, N222, and N263. The active site involves D291. N-linked (GlcNAc...) asparagine glycans are attached at residues N326, N333, N365, N453, N534, N553, N575, N679, and N725. The interval 730 to 765 (EDSSDDPNYGWEDSEYIPEGARDGSPQPLLKAGGAP) is disordered.

The protein belongs to the glycosyl hydrolase 3 family.

The protein resides in the secreted. It carries out the reaction Hydrolysis of terminal, non-reducing beta-D-glucosyl residues with release of beta-D-glucose.. It functions in the pathway glycan metabolism; cellulose degradation. Its function is as follows. Beta-glucosidases are one of a number of cellulolytic enzymes involved in the degradation of cellulosic biomass. Catalyzes the last step releasing glucose from the inhibitory cellobiose. The sequence is that of Probable beta-glucosidase A (bglA) from Neosartorya fischeri (strain ATCC 1020 / DSM 3700 / CBS 544.65 / FGSC A1164 / JCM 1740 / NRRL 181 / WB 181) (Aspergillus fischerianus).